A 429-amino-acid chain; its full sequence is CinA-like protein (429 aa).

This sequence belongs to the CinA family.

The sequence is that of CinA-like protein from Prochlorococcus marinus (strain MIT 9313).